A 467-amino-acid chain; its full sequence is Tubulointerstitial nephritis antigen-like (467 aa).

A signal peptide spans Met-1 to Ala-21. Residues Glu-49–Pro-96 form the SMB domain. Intrachain disulfides connect Cys-53-Cys-72, Cys-70-Cys-72, Cys-70-Cys-84, Cys-76-Cys-83, and Cys-84-Cys-91. Asn-77 is a glycosylation site (N-linked (GlcNAc...) asparagine). An N-linked (GlcNAc...) asparagine glycan is attached at Asn-160.

Belongs to the peptidase C1 family. Post-translationally, glycosylated.

It localises to the secreted. Functionally, may be implicated in the adrenocortical zonation and in mechanisms for repressing the CYP11B1 gene expression in adrenocortical cells. This is a non catalytic peptidase C1 family protein. This is Tubulointerstitial nephritis antigen-like (Tinagl1) from Rattus norvegicus (Rat).